The primary structure comprises 432 residues: Negative regulator of systemic acquired resistance SNI1 (432 aa).

As to quaternary structure, interacts with SSN2. Binds to NTL9/CBNAC to promote its binding to promoters of target genes. Component of the SMC5-SMC6 complex which consists at least of SMC5 and SMC6B. Interacts with RAD17. Expressed at low levels in the veins.

The protein resides in the nucleus. In terms of biological role, component of the SMC5-SMC6 complex, a complex involved in repair of DNA double-strand breaks by homologous recombination. Transcription repressor that prevents expression of pathogenesis-related genes (PR) via histone modifications and binding negative cis-acting elements at their promoters. Negative regulator of hypersensitive response (HR) and systemic acquired resistance (SAR) required to dampen the basal expression of pathogenesis related (PR) genes. Functions synergistically with NTL9/CBNAC as negative regulator of pathogen-induced PR1 expression and basal resistance to a virulent strain of P.syringae. Binds to the PR1 gene promoter to suppress defense response in the absence of pathogen challenge and is removed in response to induction. Negatively regulates both gene expression and DNA recombination during pathogen infection, thus being involved in short-term defense response and a long-term survival strategy. Prevents effective immune responses that involve activation of DNA damage responses, probably by negatively regulating the DNA damage sensors RAD17 and ATR. Negative regulator of defenses against the beet cyst nematode H.schachtii. The protein is Negative regulator of systemic acquired resistance SNI1 of Arabidopsis thaliana (Mouse-ear cress).